The primary structure comprises 272 residues: uncharacterized protein (272 aa).

The active site involves glutamate 163.

The protein belongs to the glycosyl hydrolase 25 family.

This is an uncharacterized protein from Escherichia coli O157:H7.